The following is a 149-amino-acid chain: D-aminoacyl-tRNA deacylase (149 aa).

A Gly-cisPro motif, important for rejection of L-amino acids motif is present at residues 137-138; it reads GP.

Belongs to the DTD family. As to quaternary structure, homodimer.

The protein localises to the cytoplasm. It carries out the reaction glycyl-tRNA(Ala) + H2O = tRNA(Ala) + glycine + H(+). The enzyme catalyses a D-aminoacyl-tRNA + H2O = a tRNA + a D-alpha-amino acid + H(+). Its function is as follows. An aminoacyl-tRNA editing enzyme that deacylates mischarged D-aminoacyl-tRNAs. Also deacylates mischarged glycyl-tRNA(Ala), protecting cells against glycine mischarging by AlaRS. Acts via tRNA-based rather than protein-based catalysis; rejects L-amino acids rather than detecting D-amino acids in the active site. By recycling D-aminoacyl-tRNA to D-amino acids and free tRNA molecules, this enzyme counteracts the toxicity associated with the formation of D-aminoacyl-tRNA entities in vivo and helps enforce protein L-homochirality. This chain is D-aminoacyl-tRNA deacylase, found in Pediococcus pentosaceus (strain ATCC 25745 / CCUG 21536 / LMG 10740 / 183-1w).